Consider the following 213-residue polypeptide: Pyridoxine/pyridoxamine 5'-phosphate oxidase (213 aa).

Substrate-binding positions include Arg8–Tyr11 and Lys66. FMN is bound by residues Arg61–Lys66, Phe76–Thr77, Arg82, Lys83, and Gln105. Positions 123, 127, and 131 each coordinate substrate. FMN is bound by residues Gln140–Ser141 and Trp184. Arg190 to His192 contributes to the substrate binding site. Arg194 contacts FMN.

This sequence belongs to the pyridoxamine 5'-phosphate oxidase family. As to quaternary structure, homodimer. The cofactor is FMN.

It catalyses the reaction pyridoxamine 5'-phosphate + O2 + H2O = pyridoxal 5'-phosphate + H2O2 + NH4(+). It carries out the reaction pyridoxine 5'-phosphate + O2 = pyridoxal 5'-phosphate + H2O2. It functions in the pathway cofactor metabolism; pyridoxal 5'-phosphate salvage; pyridoxal 5'-phosphate from pyridoxamine 5'-phosphate: step 1/1. Its pathway is cofactor metabolism; pyridoxal 5'-phosphate salvage; pyridoxal 5'-phosphate from pyridoxine 5'-phosphate: step 1/1. Its function is as follows. Catalyzes the oxidation of either pyridoxine 5'-phosphate (PNP) or pyridoxamine 5'-phosphate (PMP) into pyridoxal 5'-phosphate (PLP). The polypeptide is Pyridoxine/pyridoxamine 5'-phosphate oxidase (Paraburkholderia phytofirmans (strain DSM 17436 / LMG 22146 / PsJN) (Burkholderia phytofirmans)).